The sequence spans 456 residues: MSMELTVLGPLAGRSFAIAGKPKLLLLRPTNLPLLRLSLPLSLPNFSSSSRFNSPIVFAAQESNLSVSNENETSEWLMQDFYTLRKDVEIASARVEEIRASANLQQLEQEITNLESKATDTSFWDDRTKAQETLSSLNDLKDRMRLLSEFKTMVEDAETIVKLTEEMDSTDVSLLEEAMGIIKELNKSLDKFELTQLLSGPYDKEGAVVYITAGAGGTDAQDWADMLLRMYMRWGEKQRYKTKVVEMSNGEEAGIKSATLEIEGRYAYGYISGEKGTHRIVRQSPFNSKGLRQTSFSGVEVMPLLPEEAVGIEIPEEDLDISFTRAGGKGGQNVNKVETAVRITHIPTGVAVRCTEERSQLANKTRALIRLKAKLMVIAEEQRATEIKEIRGDAVKAEWGQQIRNYVFHPYKLVKDVRTGHETSDITSVMDGDLDPFIKAYLKHKYTLAMASAVTN.

Residues Met1–Phe58 constitute a chloroplast transit peptide.

Belongs to the prokaryotic/mitochondrial release factor family. Expressed in leaves, stems and flowers.

The protein resides in the plastid. It is found in the chloroplast stroma. In terms of biological role, directs the termination of translation in response to the peptide chain termination codon UGA. Required for the proper translation, stability and normal processing of UGA-containing polycistronic transcripts in chloroplasts. The sequence is that of Peptide chain release factor PrfB1, chloroplastic from Arabidopsis thaliana (Mouse-ear cress).